Here is a 667-residue protein sequence, read N- to C-terminus: Sterile alpha motif domain-containing protein 15 (667 aa).

Residues 1-18 show a composition bias toward acidic residues; the sequence is MAEVPEDYDSGPDEDGEP. Disordered regions lie at residues 1–108 and 147–424; these read MAEV…KSER and SAME…IKSK. Composition is skewed to basic and acidic residues over residues 19–53, 84–93, 187–196, and 228–266; these read ESER…HEPQ, IAKESKRDVP, ESLRVQHEET, and TKPD…KSSE. Positions 268–277 are enriched in acidic residues; sequence AGLEPPEETQ. 4 stretches are compositionally biased toward basic and acidic residues: residues 284–314, 322–338, 346–364, and 381–422; these read MQRK…KSTD, EEIK…KPNE, EMMK…EEKN, and PRVE…EPIK. The SAM domain occupies 538–601; the sequence is WDPEKVAEWI…SRHTRELLEI (64 aa).

The sequence is that of Sterile alpha motif domain-containing protein 15 (SAMD15) from Macaca fascicularis (Crab-eating macaque).